The chain runs to 516 residues: MVIARGLLRSNASSSSSQAINLLKYVTSTGSLQGHTQNLCDASTRHFSSVPSPQSNSTEENGFKGHGMLAPFTAGWQSTDVHPLVIERSEGSYVYDIDGKKYLDSLAGLWCTALGGSEPRLAKAATEQLHKLPFYHSFWNRTTKPSLDLAKELLSMFTAREMGKVFFTNSGSEANDSQVKLVWYYNNALGRPDKKKFIARSKSYHGSTLISASLSGLPALHQKFDLPAPFVLHTDCPHYWRFHLPGETEEEFATRLANNLEELILKEGPETIAAFIAEPVMGAGGVIPPPKTYFEKVQAIVKKYDILFIADEVITAFGRLGTMFGSDMYNIKPDLVSMAKALSSAYVPIGAIMVSPEISDVIHSQSNKLGSFAHGFTYSGHPVACAVAIEALKIYQERNIPDHVKQISPRFQEGVKAFAGSPIVGEIRGVGLILGTEFADNKSPNDPFPAEWGVGAIFGAECQKRGMLVRVAGDNIMMSPPLIMTPDEVEELVSIYGDALKATEERVAELKSKKNN.

Residues methionine 1–phenylalanine 47 constitute a mitochondrion transit peptide. Polar residues predominate over residues arginine 45–glutamate 60. A disordered region spans residues arginine 45–lysine 64. Glycine 171–serine 172 is a pyridoxal 5'-phosphate binding site. Position 204 (tyrosine 204) interacts with substrate. Aspartate 311 serves as a coordination point for pyridoxal 5'-phosphate. Lysine 340 provides a ligand contact to substrate. Lysine 340 carries the post-translational modification N6-(pyridoxal phosphate)lysine.

This sequence belongs to the class-III pyridoxal-phosphate-dependent aminotransferase family.

Its subcellular location is the mitochondrion. It catalyses the reaction 4-aminobutanoate + pyruvate = succinate semialdehyde + L-alanine. The catalysed reaction is 4-aminobutanoate + glyoxylate = succinate semialdehyde + glycine. In terms of biological role, transaminase that degrades gamma-amino butyric acid (GABA) and uses pyruvate as amino-group acceptor, but not 2-oxoglutarate. This is Gamma-aminobutyrate transaminase 1, mitochondrial from Oryza sativa subsp. indica (Rice).